The following is a 216-amino-acid chain: MPELVFFSGTMDCGKSTLALQIGHNRSARGLQGVIFTRDDRAGEGKLSSRLGLVTEAVEAAPGMDLHAYLVDQMSKGGKVDYLIVDEAQFLAPEQIDQLARVVDDLDLDVFAFGITTDFRTKLFPGSQRLIELADRIETLQVEAMCWCGARATHNARTVGGEMVVEGEQVVVGDVNRPAAEVGYEVLCRRHHRRRMTSASAYAAAISPDVLPVTSA.

Residues 9–16 and 86–89 each bind ATP; these read GTMDCGKS and DEAQ. E87 (proton acceptor) is an active-site residue.

Belongs to the thymidine kinase family. Homotetramer.

Its subcellular location is the cytoplasm. The enzyme catalyses thymidine + ATP = dTMP + ADP + H(+). This chain is Thymidine kinase, found in Streptomyces avermitilis (strain ATCC 31267 / DSM 46492 / JCM 5070 / NBRC 14893 / NCIMB 12804 / NRRL 8165 / MA-4680).